The chain runs to 141 residues: Auxin-responsive protein SAUR64 (141 aa).

The protein belongs to the ARG7 family.

The protein localises to the cell membrane. May promote auxin-stimulated organ elongation, such as hypocotyls, stamen filaments and petals. The protein is Auxin-responsive protein SAUR64 of Arabidopsis thaliana (Mouse-ear cress).